Reading from the N-terminus, the 2139-residue chain is U5 small nuclear ribonucleoprotein 200 kDa helicase (2139 aa).

Residues serine 17 and serine 26 each carry the phosphoserine modification. Residues 39 to 80 (EVLSLVGKLEGTRMGDKAQRTKPQMQEERRAKRRKRDEDRHD) form a disordered region. Residue lysine 46 forms a Glycyl lysine isopeptide (Lys-Gly) (interchain with G-Cter in SUMO2) linkage. Residues 48–80 (EGTRMGDKAQRTKPQMQEERRAKRRKRDEDRHD) are compositionally biased toward basic and acidic residues. Positions 54–84 (DKAQRTKPQMQEERRAKRRKRDEDRHDINKM) form a coiled coil. At serine 225 the chain carries Phosphoserine. The residue at position 389 (threonine 389) is a Phosphothreonine. Residues 395–2132 (DLDQGGEALA…YKFSVDVKEA (1738 aa)) form an interaction with C9orf78 and WBP4 region. The Helicase ATP-binding 1 domain occupies 490–673 (RAALETDENL…FLRVDPAKGL (184 aa)). Residue 503-510 (APTGAGKT) participates in ATP binding. Residues 615 to 618 (DEIH) carry the DEAH box motif. Residues 684 to 921 (PLEQTYVGIT…NAKDAVNWLG (238 aa)) enclose the Helicase C-terminal 1 domain. At tyrosine 709 the chain carries Phosphotyrosine. A Glycyl lysine isopeptide (Lys-Gly) (interchain with G-Cter in SUMO) cross-link involves residue lysine 944. Lysine 971 carries the N6-acetyllysine; alternate modification. Residue lysine 971 forms a Glycyl lysine isopeptide (Lys-Gly) (interchain with G-Cter in SUMO); alternate linkage. Positions 982 to 1289 (TELGRIASHY…SCETQLPVSF (308 aa)) constitute an SEC63 1 domain. Residues lysine 1071 and lysine 1199 each participate in a glycyl lysine isopeptide (Lys-Gly) (interchain with G-Cter in SUMO) cross-link. Residues 1285–2139 (LPVSFRHLIL…KEAETDSDSD (855 aa)) are interaction with TSSC4. The Helicase ATP-binding 2 domain maps to 1340-1515 (NTVYNSDDNV…WLGCSATSTF (176 aa)). 1353 to 1360 (APTGSGKT) provides a ligand contact to ATP. The residue at position 1431 (threonine 1431) is a Phosphothreonine. A DEAH box motif is present at residues 1457–1460 (DEVH). In terms of domain architecture, Helicase C-terminal 2 spans 1548-1756 (PVYHAITKHS…TIENKQDAVD (209 aa)). Threonine 1768 is modified (phosphothreonine). Residues 1815 to 2127 (PLNLGMIAAY…GCDQEYKFSV (313 aa)) enclose the SEC63 2 domain. The residue at position 2005 (serine 2005) is a Phosphoserine. Residue lysine 2094 forms a Glycyl lysine isopeptide (Lys-Gly) (interchain with G-Cter in SUMO) linkage. Threonine 2134 is subject to Phosphothreonine. Phosphoserine is present on residues serine 2136 and serine 2138.

This sequence belongs to the helicase family. SKI2 subfamily. In terms of assembly, component of a core complex containing at least PRPF8, SNRNP200, EFTUD2 and SNRNP40. Component of the U5 snRNP and U4/U6-U5 tri-snRNP complexes, building blocks of the spliceosome. Component of the U4/U6-U5 tri-snRNP complex composed of the U4, U6 and U5 snRNAs and at least PRPF3, PRPF4, PRPF6, PRPF8, PRPF31, SNRNP200, TXNL4A, SNRNP40, DDX23, CD2BP2, PPIH, SNU13, EFTUD2, SART1 and USP39. Component of precatalytic, catalytic and postcatalytic spliceosomal complexes. Component of the minor spliceosome, which splices U12-type introns. Interacts with C9orf78; the interaction is direct and mutually exclusive with its interaction with WBP4. Interacts with WBP4; the interaction is mutually exclusive with its interaction with C9orf78. Interacts with PRPF8. Interacts with TSSC4; the interaction is direct, excludes recruitment of C9ORF78 and WBP4 to SNRNP200 and negatively regulates its RNA helicase activity.

It is found in the nucleus. It carries out the reaction ATP + H2O = ADP + phosphate + H(+). In terms of biological role, catalyzes the ATP-dependent unwinding of U4/U6 RNA duplices, an essential step in the assembly of a catalytically active spliceosome. Plays a role in pre-mRNA splicing as core component of precatalytic, catalytic and postcatalytic spliceosomal complexes. As a component of the minor spliceosome, involved in the splicing of U12-type introns in pre-mRNAs. Involved in spliceosome assembly, activation and disassembly. Mediates changes in the dynamic network of RNA-RNA interactions in the spliceosome. This Rattus norvegicus (Rat) protein is U5 small nuclear ribonucleoprotein 200 kDa helicase (Snrnp200).